A 367-amino-acid polypeptide reads, in one-letter code: Cellular tumor antigen p53 (367 aa).

Residues 1–47 (MEEENISLPLSQDTFQDLWDNVSAPPISTIQTAALENEAWPAERQMN) form a transcription activation (acidic) region. Residues 86–273 (DYPGEYGFKL…KTEETNSTKM (188 aa)) mediate DNA binding. Positions 160, 163, 219, and 223 each coordinate Zn(2+). An interaction with DNA region spans residues 254–261 (RVCACPGR). Basic and acidic residues predominate over residues 262-279 (DRKTEETNSTKMQNDAKD). Disordered stretches follow at residues 262-306 (DRKT…AEED) and 332-367 (DLLENKPKSKATHRPDGPIPPSGKRLLHRGEKSDSD). A Bipartite nuclear localization signal motif is present at residues 282–300 (KRKSVPTPDSTTIKKSKTA). Low complexity predominate over residues 291–302 (STTIKKSKTASS). Residues 308 to 337 (NEVYTLQIRGRKRYEMLKKINDGLDLLENK) are oligomerization. A Nuclear export signal motif is present at residues 322–333 (EMLKKINDGLDL). Positions 342–363 (ATHRPDGPIPPSGKRLLHRGEK) are basic (repression of DNA-binding).

It belongs to the p53 family. In terms of assembly, binds DNA as a homotetramer. Zn(2+) is required as a cofactor.

Its subcellular location is the cytoplasm. The protein localises to the nucleus. Functionally, multifunctional transcription factor that induces cell cycle arrest, DNA repair or apoptosis upon binding to its target DNA sequence. Acts as a tumor suppressor in many tumor types; induces growth arrest or apoptosis depending on the physiological circumstances and cell type. Negatively regulates cell division by controlling expression of a set of genes required for this process. One of the activated genes is an inhibitor of cyclin-dependent kinases. Apoptosis induction seems to be mediated either by stimulation of BAX and FAS antigen expression, or by repression of Bcl-2 expression. The protein is Cellular tumor antigen p53 (tp53) of Tetraodon miurus (Congo puffer).